Consider the following 271-residue polypeptide: ABC transporter I family member 10 (271 aa).

In terms of domain architecture, ABC transporter spans 40-267; sequence VECRNLCFSV…IKAKQSSYID (228 aa). 77–84 contacts ATP; it reads GPNGCGKS.

Belongs to the ABC transporter superfamily. ABCI family.

In Arabidopsis thaliana (Mouse-ear cress), this protein is ABC transporter I family member 10 (ABCI10).